The following is a 248-amino-acid chain: Proteasome subunit alpha (248 aa).

Residues L229 to E248 are disordered.

This sequence belongs to the peptidase T1A family. In terms of assembly, the 20S proteasome core is composed of 14 alpha and 14 beta subunits that assemble into four stacked heptameric rings, resulting in a barrel-shaped structure. The two inner rings, each composed of seven catalytic beta subunits, are sandwiched by two outer rings, each composed of seven alpha subunits. The catalytic chamber with the active sites is on the inside of the barrel. Has a gated structure, the ends of the cylinder being occluded by the N-termini of the alpha-subunits. Is capped by the proteasome-associated ATPase, ARC.

The protein resides in the cytoplasm. The protein operates within protein degradation; proteasomal Pup-dependent pathway. The formation of the proteasomal ATPase ARC-20S proteasome complex, likely via the docking of the C-termini of ARC into the intersubunit pockets in the alpha-rings, may trigger opening of the gate for substrate entry. Interconversion between the open-gate and close-gate conformations leads to a dynamic regulation of the 20S proteasome proteolysis activity. Component of the proteasome core, a large protease complex with broad specificity involved in protein degradation. The chain is Proteasome subunit alpha from Streptomyces scabiei (strain 87.22).